Reading from the N-terminus, the 131-residue chain is uncharacterized protein (131 aa).

Positions Asp-8 to Cys-124 constitute a Response regulatory domain. Asp-57 carries the 4-aspartylphosphate modification.

This is an uncharacterized protein from Leptolyngbya boryana (Plectonema boryanum).